The chain runs to 28 residues: M-ectatotoxin-Eb2c (28 aa).

Expressed by the venom gland.

It is found in the secreted. Its function is as follows. Antimicrobial peptide active against Gram-negative bacterium E.coli MH1 (MIC=3.5 uM) and P.aeruginosa PAO1 (MIC=10 uM) and against Gram-positive bacterium A.globiformis VKM Ac-1112 (MIC=1.25 uM). This Ectatomma brunneum (Ant) protein is M-ectatotoxin-Eb2c.